Reading from the N-terminus, the 151-residue chain is Large ribosomal subunit protein uL13 (151 aa).

Residues 129–151 (SNHPHQAQKPETLTINTIPGGNN) form a disordered region.

This sequence belongs to the universal ribosomal protein uL13 family. In terms of assembly, part of the 50S ribosomal subunit.

This protein is one of the early assembly proteins of the 50S ribosomal subunit, although it is not seen to bind rRNA by itself. It is important during the early stages of 50S assembly. The sequence is that of Large ribosomal subunit protein uL13 from Gloeothece citriformis (strain PCC 7424) (Cyanothece sp. (strain PCC 7424)).